The primary structure comprises 281 residues: Ribosomal protein L11 methyltransferase (281 aa).

Residues Thr133, Gly154, Asp175, and Asn216 each contribute to the S-adenosyl-L-methionine site.

Belongs to the methyltransferase superfamily. PrmA family.

The protein localises to the cytoplasm. It catalyses the reaction L-lysyl-[protein] + 3 S-adenosyl-L-methionine = N(6),N(6),N(6)-trimethyl-L-lysyl-[protein] + 3 S-adenosyl-L-homocysteine + 3 H(+). Functionally, methylates ribosomal protein L11. In Campylobacter jejuni (strain RM1221), this protein is Ribosomal protein L11 methyltransferase.